Consider the following 169-residue polypeptide: Putative adenylate kinase (169 aa).

ATP-binding residues include G10, G12, K13, T14, and T15. The NMP stretch occupies residues 28–51 (HLNDLVGTEGLYDGVDADRGSKIV). The tract at residues 98 to 108 (DRGDSPEKAAE) is LID. Residue R99 participates in ATP binding.

It belongs to the adenylate kinase family. AK6 subfamily. Interacts with uS11. Not a structural component of 40S pre-ribosomes, but transiently interacts with them by binding to uS11.

The enzyme catalyses AMP + ATP = 2 ADP. It catalyses the reaction ATP + H2O = ADP + phosphate + H(+). Functionally, broad-specificity nucleoside monophosphate (NMP) kinase that catalyzes the reversible transfer of the terminal phosphate group between nucleoside triphosphates and monophosphates. Also has ATPase activity. Involved in the late maturation steps of the 30S ribosomal particles, specifically 16S rRNA maturation. While NMP activity is not required for ribosome maturation, ATPase activity is. Associates transiently with small ribosomal subunit protein uS11. ATP hydrolysis breaks the interaction with uS11. May temporarily remove uS11 from the ribosome to enable a conformational change of the ribosomal RNA that is needed for the final maturation step of the small ribosomal subunit. The polypeptide is Putative adenylate kinase (Halobacterium salinarum (strain ATCC 29341 / DSM 671 / R1)).